A 373-amino-acid chain; its full sequence is Probable di-N-acetylchitobiase 1 (373 aa).

The first 20 residues, 1–20, serve as a signal peptide directing secretion; that stretch reads MKIFIIISLILTILIIQSKS. The GH18 domain occupies 21–369; the sequence is KECPCSNVEL…SGMWGALNSF (349 aa). N48 is a glycosylation site (N-linked (GlcNAc...) asparagine). Chitin-binding positions include 53 to 54 and 82 to 85; these read PY and NGVR. A glycan (N-linked (GlcNAc...) asparagine) is linked at N99. Residue E127 is the Proton donor of the active site. Residues Y128 and 191 to 194 contribute to the chitin site; that span reads MDYD. N-linked (GlcNAc...) asparagine glycans are attached at residues N222, N250, N269, N279, and N288. W347 contributes to the chitin binding site.

It belongs to the glycosyl hydrolase 18 family.

It localises to the lysosome. Its function is as follows. Involved in the degradation of asparagine-linked glycoproteins. May hydrolyze of N-acetyl-beta-D-glucosamine (1-4)N-acetylglucosamine chitobiose core from the reducing end of the bond. This is Probable di-N-acetylchitobiase 1 (ctbs1) from Dictyostelium discoideum (Social amoeba).